Here is a 748-residue protein sequence, read N- to C-terminus: Catalase-peroxidase (748 aa).

A cross-link (tryptophyl-tyrosyl-methioninium (Trp-Tyr) (with M-264)) is located at residues W92–Y238. H93 functions as the Proton acceptor in the catalytic mechanism. A cross-link (tryptophyl-tyrosyl-methioninium (Tyr-Met) (with W-92)) is located at residues Y238–M264. Residue H279 coordinates heme b.

This sequence belongs to the peroxidase family. Peroxidase/catalase subfamily. In terms of assembly, homodimer or homotetramer. Heme b is required as a cofactor. In terms of processing, formation of the three residue Trp-Tyr-Met cross-link is important for the catalase, but not the peroxidase activity of the enzyme.

It catalyses the reaction H2O2 + AH2 = A + 2 H2O. The enzyme catalyses 2 H2O2 = O2 + 2 H2O. Functionally, bifunctional enzyme with both catalase and broad-spectrum peroxidase activity. The polypeptide is Catalase-peroxidase (Xanthomonas euvesicatoria pv. vesicatoria (strain 85-10) (Xanthomonas campestris pv. vesicatoria)).